A 157-amino-acid polypeptide reads, in one-letter code: Small ribosomal subunit protein uS7 (157 aa).

The protein belongs to the universal ribosomal protein uS7 family. As to quaternary structure, part of the 30S ribosomal subunit. Contacts proteins S9 and S11.

One of the primary rRNA binding proteins, it binds directly to 16S rRNA where it nucleates assembly of the head domain of the 30S subunit. Is located at the subunit interface close to the decoding center, probably blocks exit of the E-site tRNA. This chain is Small ribosomal subunit protein uS7, found in Psychrobacter sp. (strain PRwf-1).